Here is a 167-residue protein sequence, read N- to C-terminus: Protein DLS1 (167 aa).

A Phosphoserine modification is found at Ser17.

As to quaternary structure, component of the ISW2 complex, which at least consists of ISW2, ITC1, DLS1 and DPB4.

The protein localises to the nucleus. In terms of biological role, functions as a component of the ISW2 complex, which acts in remodeling the chromatin by catalyzing an ATP-dependent alteration in the structure of nucleosomal DNA. The ISW2 complex is involved in coordinating transcriptional repression and in inheritance of telomeric silencing. It is involved in repression of MAT a-specific genes, INO1, and early meiotic genes during mitotic growth dependent upon transcription factor UME6 and in a parallel pathway to the RPD3-SIN3 histone deacetylase complex. DLS1 is partially required for the ISW2 complex chromatin remodeling activity and is not required for its interaction with chromatin. This chain is Protein DLS1 (DLS1), found in Saccharomyces cerevisiae (strain ATCC 204508 / S288c) (Baker's yeast).